Consider the following 449-residue polypeptide: Interferon-related developmental regulator 1 (449 aa).

A compositionally biased stretch (basic residues) spans 1–10; sequence MPKNKKRNAP. A disordered region spans residues 1-41; sequence MPKNKKRNAPHRGGGGGGGSGAATSAATTGGPHRTVQPFSD. Positions 12 to 21 are enriched in gly residues; sequence RGGGGGGGSG. Residues 22 to 31 are compositionally biased toward low complexity; sequence AATSAATTGG.

It belongs to the IFRD family. In terms of assembly, interacts with PSIP1/LEDGF. In terms of tissue distribution, expressed at high levels in the embryonic brain in the period related to neuroblast proliferation and differentiation.

The protein localises to the cytoplasm. The protein resides in the cell membrane. Its subcellular location is the nucleus. Its function is as follows. Probably participates in neurogenesis. Could play a role in regulating gene activity in the proliferative and/or differentiative pathways induced by NGF. This chain is Interferon-related developmental regulator 1 (Ifrd1), found in Rattus norvegicus (Rat).